Reading from the N-terminus, the 320-residue chain is Cytochrome f (320 aa).

The signal sequence occupies residues 1–35 (MQNRNTFSWVKEPINRSISVLIIIYVITQTSISNA). Heme is bound by residues Tyr36, Cys56, Cys59, and His60. Residues 286–306 (VQGLLFFLASVTLAQIFLVLK) traverse the membrane as a helical segment.

It belongs to the cytochrome f family. In terms of assembly, the 4 large subunits of the cytochrome b6-f complex are cytochrome b6, subunit IV (17 kDa polypeptide, petD), cytochrome f and the Rieske protein, while the 4 small subunits are PetG, PetL, PetM and PetN. The complex functions as a dimer. Heme serves as cofactor.

It is found in the plastid. Its subcellular location is the chloroplast thylakoid membrane. In terms of biological role, component of the cytochrome b6-f complex, which mediates electron transfer between photosystem II (PSII) and photosystem I (PSI), cyclic electron flow around PSI, and state transitions. The sequence is that of Cytochrome f from Piper cenocladum (Ant piper).